A 590-amino-acid polypeptide reads, in one-letter code: Major surface protein MspTL (590 aa).

A signal peptide spans 1–19 (MKKILAFFLVFALAGAVFA).

The protein localises to the cell outer membrane. Its function is as follows. Major component of the outer membrane. The polypeptide is Major surface protein MspTL (mspTL) (Treponema lecithinolyticum).